The following is a 204-amino-acid chain: ATP phosphoribosyltransferase (204 aa).

The protein belongs to the ATP phosphoribosyltransferase family. Short subfamily. As to quaternary structure, heteromultimer composed of HisG and HisZ subunits.

It is found in the cytoplasm. It carries out the reaction 1-(5-phospho-beta-D-ribosyl)-ATP + diphosphate = 5-phospho-alpha-D-ribose 1-diphosphate + ATP. The protein operates within amino-acid biosynthesis; L-histidine biosynthesis; L-histidine from 5-phospho-alpha-D-ribose 1-diphosphate: step 1/9. Catalyzes the condensation of ATP and 5-phosphoribose 1-diphosphate to form N'-(5'-phosphoribosyl)-ATP (PR-ATP). Has a crucial role in the pathway because the rate of histidine biosynthesis seems to be controlled primarily by regulation of HisG enzymatic activity. The chain is ATP phosphoribosyltransferase from Campylobacter concisus (strain 13826).